Reading from the N-terminus, the 115-residue chain is Evasin P1182 (115 aa).

The first 26 residues, 1 to 26 (MALNWSFRVIFVSTMWCALLKFATLG), serve as a signal peptide directing secretion. 4 disulfide bridges follow: C38–C58, C54–C94, C70–C99, and C89–C108. 3 N-linked (GlcNAc...) asparagine glycosylation sites follow: N45, N72, and N103.

It localises to the secreted. In terms of biological role, salivary chemokine-binding protein which binds to host chemokines CCL2, CCL3, CCL4, CCL8 and CCL18. The polypeptide is Evasin P1182 (Amblyomma maculatum (Gulf Coast tick)).